Consider the following 267-residue polypeptide: Small ribosomal subunit protein uS2 (267 aa).

Positions 224 to 244 (GRQGEDEDVTEDSFKDNKDAK) are disordered. Basic and acidic residues predominate over residues 235–244 (DSFKDNKDAK).

The protein belongs to the universal ribosomal protein uS2 family.

The chain is Small ribosomal subunit protein uS2 from Lactiplantibacillus plantarum (strain ATCC BAA-793 / NCIMB 8826 / WCFS1) (Lactobacillus plantarum).